The primary structure comprises 2034 residues: MASAVSPANLPAVLLQPRWKRVVGWSGPVPRPRHGHRAVAIKELIVVFGGGNEGIVDELHVYNTATNQWFIPAVRGDIPPGCAAYGFVCDGTRLLVFGGMVEYGKYSNDLYELQASRWEWKRLKAKTPKNGPPPCPRLGHSFSLVGNKCYLFGGLANDSEDPKNNIPRYLNDLYILELRPGSGVVAWDIPITYGVLPPPRESHTAVVYTEKDNKKSKLVIYGGMSGCRLGDLWTLDIETLTWNKPSLSGVAPLPRSLHSATTIGNKMYVFGGWVPLVMDDVKVATHEKEWKCTNTLACLNLDTMAWETILMDTLEDNIPRARAGHCAVAINTRLYIWSGRDGYRKAWNNQVCCKDLWYLETEKPPPPARVQLVRANTNSLEVSWGAVATADSYLLQLQKYDIPATAATATSPTPNPVPSVPANPPKSPAPAAAAPAVQPLTQVGITLVPQAAAAPPSTTTIQVLPTVPGSSISVPTAARTQGVPAVLKVTGPQATTGTPLVTMRPASQAGKAPVTVTSLPASVRMVVPTQSAQGTVIGSNPQMSGMAALAAAAAATQKIPPSSAPTVLSVPAGTTIVKTVAVTPGTTTLPATVKVASSPVMVSNPATRMLKTAAAQVGTSVSSAANTSTRPIITVHKSGTVTVAQQAQVVTTVVGGVTKTITLVKSPISVPGGSALISNLGKVMSVVQTKPVQTSAVTGQASTGPVTQIIQTKGPLPAGTILKLVTSADGKPTTIITTTQASGAGTKPTILGISSVSPSTTKPGTTTIIKTIPMSAIITQAGATGVTSSPGIKSPITIITTKVMTSGTGAPAKIITAVPKIATGHGQQGVTQVVLKGAPGQPGTILRTVPMGGVRLVTPVTVSAVKPAVTTLVVKGTTGVTTLGTVTGTVSTSLAGAGAHSTSASLATPITTLGTIATLSSQVINPTAITVSAAQTTLTAAGGLTTPTITMQPVSQPTQVTLITAPSGVEAQPVHDLPVSILASPTTEQPTATVTIADSGQGDVQPGTVTLVCSNPPCETHETGTTNTATTTVVANLGGHPQPTQVQFVCDRQEAAASLVTSAVGQQNGNVVRVCSNPPCETHETGTTNTATTATSNMAGQHGCSNPPCETHETGTTSTATTAMSSMGTGQQRDARRATNTPTVVRITVAPGALERAQGTVKPPCQTQQTNMTSTTMTVQATGAPCSAGPLLRPSVALETGSHSPAFVQLALPSVRVGLSGPSSKDVPTGRQPETYHTYTTNTPTTARSIMVAGELGTARVVPTSQYDCLQASSPSSTMTMTALEALLCPSATVTQVCSNPPCETHETGTTNTATTSNAGSAQRVCSNPPCETHETGTTHTATTATSNGGAGQPEGGQQPASGHPCETHQTTSTGTTMSVSVGALIPDATPSHGTLESGLEVVAVPTVTSQAGATLLASFSTQRVCSNPPCETHETGTTHTATTVTSNMSSNQDPPPAASDQGEVASTQGDSTNITSASAITTTVSSTLPRAVTTVTQSTPVPGPSVPPPEELQVSPGPRQQLPPRQLLQSASTPLMGESAEVLSASQTPELQAAVDLSSTGDPSSVQEPTTSAVVATVVVQPPQPTQSEVDQLSLPQELMAEAQAGTTTLMVTGLTPEELAVTAAAEAAAQAAATEEAQALAIQAVLQAAQQAVMGTGEPMDTSEAAAAVTQAELGHLSAEGQEGQATTIPIVLTQQELAALVQQQQQLQEAQAQAQQQHHLPTEALAPADSLNDPSIESNCLNELASAVPSTVALLPSTATESLAPSNTFVAPQPVVVASPAKMQAAATLTEVANGIESLGVKPDLPPPPSKAPIKKENQWFDVGVIKGTSVMVTHYFLPPDDAVQSDDDSGTVPDYNQLKKQELQPGTAYKFRVAGINACGRGPFSEISAFKTCLPGFPGAPCAIKISKSPDGAHLTWEPPSVTSGKIIEYSVYLAIQSSQASGEPKSSTPAQLAFMRVYCGPSPSCLVQSSSLSNAHIDYTTKPAIIFRIAARNEKGYGPATQVRWLQETSKDSSGTKPASKRPMSSPEM.

Alanine 2 bears the N-acetylalanine mark. Serine 6 is modified (phosphoserine). Kelch repeat units follow at residues 44-89, 93-140, 148-194, 217-265, and 266-313; these read LIVV…GFVC, RLLV…RLGH, KCYL…ITYG, KLVI…TIGN, and KMYV…LMDT. Glycyl lysine isopeptide (Lys-Gly) (interchain with G-Cter in ubiquitin) cross-links involve residues lysine 105, lysine 163, and lysine 244. A Glycyl lysine isopeptide (Lys-Gly) (interchain with G-Cter in SUMO2) cross-link involves residue lysine 282. Lysine 288 carries the N6-acetyllysine modification. Residue lysine 363 forms a Glycyl lysine isopeptide (Lys-Gly) (interchain with G-Cter in ubiquitin) linkage. A Fibronectin type-III 1 domain is found at 366 to 469; the sequence is PPARVQLVRA…TIQVLPTVPG (104 aa). A disordered region spans residues 407–434; sequence ATATSPTPNPVPSVPANPPKSPAPAAAA. Serine 411 is modified (phosphoserine). Over residues 413 to 428 the composition is skewed to pro residues; that stretch reads TPNPVPSVPANPPKSP. A required for interaction with OGT region spans residues 500-550; that stretch reads LVTMRPASQAGKAPVTVTSLPASVRMVVPTQSAQGTVIGSNPQMSGMAALA. Omega-N-methylarginine occurs at positions 504 and 524. Serine 598, serine 666, and serine 669 each carry phosphoserine. The interval 610 to 722 is interaction with SIN3A; that stretch reads LKTAAAQVGT…KGPLPAGTIL (113 aa). The interval 750–902 is interaction with ZBTB17; sequence ILGISSVSPS…SLAGAGAHST (153 aa). N6-acetyllysine is present on lysine 813. The interaction with GABP2 stretch occupies residues 813–912; the sequence is KIITAVPKIA…SASLATPITT (100 aa). HCF repeat repeat units follow at residues 1010 to 1035, 1072 to 1097, and 1101 to 1126; these read TLVCSNPPCETHETGTTNTATTTVVA, VRVCSNPPCETHETGTTNTATTATSN, and QHGCSNPPCETHETGTTSTATTAMSS. Residues 1156 to 1182 form an HCF repeat 4; degenerate repeat; sequence RAQGTVKPPCQTQQTNMTSTTMTVQAT. 2 positions are modified to phosphoserine: serine 1204 and serine 1223. Disordered stretches follow at residues 1221 to 1241, 1302 to 1374, 1444 to 1477, and 1491 to 1525; these read GPSSKDVPTGRQPETYHTYTT, PCET…TTST, TVTSNMSSNQDPPPAASDQGEVASTQGDSTNITS, and RAVTTVTQSTPVPGPSVPPPEELQVSPGPRQQLPP. HCF repeat repeat units lie at residues 1295–1320 and 1323–1348; these read TQVCSNPPCETHETGTTNTATTSNAG and QRVCSNPPCETHETGTTHTATTATSN. Over residues 1308–1321 the composition is skewed to low complexity; sequence TGTTNTATTSNAGS. One copy of the HCF repeat 7; degenerate repeat lies at 1358-1383; it reads QQPASGHPCETHQTTSTGTTMSVSVG. The HCF repeat 8 repeat unit spans residues 1423–1448; sequence QRVCSNPPCETHETGTTHTATTVTSN. Residues 1491-1501 show a composition bias toward low complexity; the sequence is RAVTTVTQSTP. At threonine 1500 the chain carries Phosphothreonine. The segment covering 1502–1511 has biased composition (pro residues); it reads VPGPSVPPPE. A phosphoserine mark is found at serine 1506 and serine 1516. A coiled-coil region spans residues 1693–1723; it reads IVLTQQELAALVQQQQQLQEAQAQAQQQHHL. Serine 1782 carries the post-translational modification Phosphoserine. Fibronectin type-III domains are found at residues 1808 to 1899 and 1901 to 2017; these read LPPP…TCLP and FPGA…TSKD. Glycyl lysine isopeptide (Lys-Gly) (interchain with G-Cter in ubiquitin) cross-links involve residues lysine 1818 and lysine 1819. Serine 1849 carries the phosphoserine modification. The tract at residues 2005 to 2034 is disordered; it reads ATQVRWLQETSKDSSGTKPASKRPMSSPEM. An N6-acetyllysine modification is found at lysine 2016.

As to quaternary structure, composed predominantly of six polypeptides ranging from 110 to 150 kDa and a minor 300 kDa polypeptide. The majority of N- and C-terminal cleavage products remain tightly, albeit non-covalently, associated. Interacts with POU2F1, CREB3, ZBTB17, EGR2, E2F4, CREBZF, SP1, GABP2, Sin3 HDAC complex (SIN3A, HDAC1, HDAC2, SUDS3), SAP30, SIN3B and FHL2. Component of a MLL1 complex, composed of at least the core components KMT2A/MLL1, ASH2L, HCFC1, WDR5 and RBBP5, as well as the facultative components BACC1, CHD8, DPY30, E2F6, HCFC2, HSP70, INO80C, KANSL1, LAS1L, MAX, MCRS1, MEN1, MGA, KAT8, PELP1, PHF20, PRP31, RING2, RUVBL1, RUVBL2, SENP3, TAF1, TAF4, TAF6, TAF7, TAF9 and TEX10. Component of a THAP1/THAP3-HCFC1-OGT complex that is required for the regulation of the transcriptional activity of RRM1. Interacts directly with THAP3 (via its HBM). Interacts (via the Kelch-repeat domain) with THAP1 (via the HBM); the interaction recruits HCHC1 to the RRM1. Interacts with THAP7 and THAP11 (via the HMB). Interacts directly with OGT; the interaction, which requires the HCFC1 cleavage site domain, glycosylates and promotes the proteolytic processing of HCFC1, retains OGT in the nucleus and impacts the expression of herpes simplex virus immediate early viral genes. Component of the SET1 complex, at least composed of the catalytic subunit (SETD1A or SETD1B), WDR5, WDR82, RBBP5, ASH2L, CXXC1, HCFC1 and DPY30. Component of the NSL complex at least composed of MOF/KAT8, KANSL1, KANSL2, KANSL3, MCRS1, PHF20, OGT1/OGT, WDR5 and HCFC1. Component of a complex at least composed of ZNF335, HCFC1, CCAR2, EMSY, MKI67, RBBP5, ASH2L and WDR5; the complex is formed as a result of interactions between components of a nuclear receptor-mediated transcription complex and a histone methylation complex. Within the complex interacts with ZNF335. Interacts with TET2 and TET3. Interacts with HCFC1R1. Interacts with THAP11. Interacts (via Kelch domain) with KMT2E/MLL5 isoform 3 (via HBM motif). Interacts with E2F1. Accessory scaffold component of the polycomb repressive deubiquitinase (PR-DUB) complex, at least composed of BAP1, one of ASXL1, ASXL2 or (probably) ASXL3 and one of MBD5 or MBD6; the PR-DUB core associates with a number of accessory proteins, including FOXK1, FOXK2, KDM1B, HCFC1, YY1 and OGT. Interacts with YY1 (via Gly-rich region); the interaction is direct. Interacts with BAP1 (via HBM-like motif). In terms of processing, proteolytically cleaved at one or several PPCE--THET sites within the HCF repeats. Further cleavage of the primary N- and C-terminal chains results in a 'trimming' and accumulation of the smaller chains. Cleavage is promoted by O-glycosylation. Post-translationally, O-glycosylated. GlcNAcylation by OGT promotes proteolytic processing. Ubiquitinated. Lys-1818 and Lys-1819 are ubiquitinated both via 'Lys-48'- and 'Lys-63'-linked polyubiquitin chains. BAP1 mediated deubiquitination of 'Lys-48'-linked polyubiquitin chains; deubiquitination by BAP1 does not seem to stabilize the protein.

The protein resides in the cytoplasm. The protein localises to the nucleus. Functionally, transcriptional coregulator. Serves as a scaffold protein, bridging interactions between transcription factors, including THAP11 and ZNF143, and transcriptional coregulators. Involved in control of the cell cycle. Also antagonizes transactivation by ZBTB17 and GABP2; represses ZBTB17 activation of the p15(INK4b) promoter and inhibits its ability to recruit p300. Coactivator for EGR2 and GABP2. Tethers the chromatin modifying Set1/Ash2 histone H3 'Lys-4' methyltransferase (H3K4me) and Sin3 histone deacetylase (HDAC) complexes (involved in the activation and repression of transcription, respectively) together. Component of a THAP1/THAP3-HCFC1-OGT complex that is required for the regulation of the transcriptional activity of RRM1. As part of the NSL complex it may be involved in acetylation of nucleosomal histone H4 on several lysine residues. Recruits KMT2E/MLL5 to E2F1 responsive promoters promoting transcriptional activation and thereby facilitates G1 to S phase transition. Modulates expression of homeobox protein PDX1, perhaps acting in concert with transcription factor E2F1, thereby regulating pancreatic beta-cell growth and glucose-stimulated insulin secretion. May negatively modulate transcriptional activity of FOXO3. The protein is Host cell factor 1 of Rattus norvegicus (Rat).